The chain runs to 271 residues: Phosphatidylglycerol--prolipoprotein diacylglyceryl transferase (271 aa).

7 helical membrane-spanning segments follow: residues 18 to 38 (IFGL…LVAL), 60 to 80 (YFIW…ILIY), 103 to 123 (FVGI…IATY), 137 to 157 (LDLV…GNFL), 181 to 201 (PSQL…LLLI), 209 to 229 (GELI…CEFF), and 236 to 256 (IGFV…MFLL). An a 1,2-diacyl-sn-glycero-3-phospho-(1'-sn-glycerol)-binding site is contributed by R152.

This sequence belongs to the Lgt family.

It localises to the cell inner membrane. The catalysed reaction is L-cysteinyl-[prolipoprotein] + a 1,2-diacyl-sn-glycero-3-phospho-(1'-sn-glycerol) = an S-1,2-diacyl-sn-glyceryl-L-cysteinyl-[prolipoprotein] + sn-glycerol 1-phosphate + H(+). It participates in protein modification; lipoprotein biosynthesis (diacylglyceryl transfer). Functionally, catalyzes the transfer of the diacylglyceryl group from phosphatidylglycerol to the sulfhydryl group of the N-terminal cysteine of a prolipoprotein, the first step in the formation of mature lipoproteins. The sequence is that of Phosphatidylglycerol--prolipoprotein diacylglyceryl transferase from Campylobacter lari (strain RM2100 / D67 / ATCC BAA-1060).